A 234-amino-acid polypeptide reads, in one-letter code: Transcription factor UDT1 (234 aa).

The interval 1 to 51 is disordered; it reads MPRRARARGGGGGGGEEVKVEDDFIDSVLNFGGGGGGEEDGDDGEEEQQQQ. Positions 37-48 are enriched in acidic residues; the sequence is GEEDGDDGEEEQ. The tract at residues 61–74 is basic motif; degenerate; it reads EFKSKNLEAERRRR. A bHLH domain is found at 61–110; the sequence is EFKSKNLEAERRRRGRLNGNIFALRAVVPKITKMSKEATLSDAIEHIKNL. The tract at residues 75 to 110 is helix-loop-helix motif; sequence GRLNGNIFALRAVVPKITKMSKEATLSDAIEHIKNL.

It belongs to the bHLH protein family.

Its subcellular location is the nucleus. In terms of biological role, transcription factor that plays a crucial role in tapetum development. Required for male fertility and pollen differentiation within the developing anther. Plays a major role in maintaining tapetum development, starting in early meiosis. Required for pollen mother cell meiosis. May regulate the anther-specific cysteine protease CP1 and lipid-transfer proteins C4 and C6. Required for anther development. Functions in parallel with GAMYB to regulate early anther development. Functions upstream of the transcription factor TDR and may positively regulate its transcription. This chain is Transcription factor UDT1, found in Oryza sativa subsp. japonica (Rice).